Reading from the N-terminus, the 302-residue chain is Dioxygenase ALT11 (302 aa).

Residues 1–22 (MSSPELPSQMGVPNGHTKLQEV) form a disordered region. Residues His147, Asp149, and His223 each coordinate Fe cation.

This sequence belongs to the PhyH family. Homodimer. Fe cation is required as a cofactor.

Its pathway is mycotoxin biosynthesis. Its function is as follows. Dioxygenase; part of the gene cluster that mediates the biosynthesis of the host-selective toxins (HSTs) AAL-toxins, sphinganine-analog mycotoxins responsible for Alternaria stem canker on tomato by the tomato pathotype. The biosynthesis starts with the polyketide synthase ALT1-catalyzed C-16 carbon chain assembly from one starter acetyl-CoA unit with malonyl-CoA extender units. ALT1 also selectively transfers methyl groups at the first and the third cycle of chain elongation for AAL toxin. The C-16 polyketide chain is released from the enzyme by a nucleophilic attack of a carbanion, which is derived from R-carbon of glycin by decarboxylation, on the carbonyl carbon of polyketide acyl chain. This step is probably catalyzed by a pyridoxal 5'-phosphate-dependent aminoacyl transferase ALT4. The respective functions of the other enzymes encoded by the cluster have still to be elucidated. The sphingosine N-acyltransferase-like protein ALT7 seems not to act as a resistance/self-tolerance factor against the toxin in the toxin biosynthetic gene cluster, contrary to what is expected. The protein is Dioxygenase ALT11 of Alternaria alternata (Alternaria rot fungus).